A 248-amino-acid chain; its full sequence is uncharacterized protein (248 aa).

The N-terminal stretch at 1–26 (MVAPRISPKIVLVGFALFAIISASLA) is a signal peptide.

This is an uncharacterized protein from Acanthamoeba polyphaga mimivirus (APMV).